Reading from the N-terminus, the 325-residue chain is Electron transfer flavoprotein subunit alpha (325 aa).

262 to 290 lines the FAD pocket; it reads LYIACGISGAIQHLAGMSNSKVIVAINKD.

The protein belongs to the ETF alpha-subunit/FixB family. As to quaternary structure, heterodimer of an alpha and a beta subunit. FAD is required as a cofactor.

The electron transfer flavoprotein serves as a specific electron acceptor for other dehydrogenases. It transfers the electrons to the main respiratory chain via ETF-ubiquinone oxidoreductase (ETF dehydrogenase). The sequence is that of Electron transfer flavoprotein subunit alpha (etfA) from Bacillus subtilis (strain 168).